Consider the following 294-residue polypeptide: Indole-3-glycerol phosphate synthase (294 aa).

Belongs to the TrpC family.

The catalysed reaction is 1-(2-carboxyphenylamino)-1-deoxy-D-ribulose 5-phosphate + H(+) = (1S,2R)-1-C-(indol-3-yl)glycerol 3-phosphate + CO2 + H2O. It functions in the pathway amino-acid biosynthesis; L-tryptophan biosynthesis; L-tryptophan from chorismate: step 4/5. In Synechococcus sp. (strain WH7803), this protein is Indole-3-glycerol phosphate synthase.